Reading from the N-terminus, the 130-residue chain is MPLSQEESTLIERATATINSIPISEDYSVASAALSSDGRIFTGVNVYHFTGGPCAELVVLGTAAAAAAGNLTCIVAIGNENRGILSPCGRCRQVLLDLHPGIKAIVKDSDGQPTAVGIRELLPSGYVWEG.

Residues 1 to 129 enclose the CMP/dCMP-type deaminase domain; that stretch reads MPLSQEESTL…ELLPSGYVWE (129 aa). Ser28 contacts substrate. Cys54 contributes to the Zn(2+) binding site. The Proton donor role is filled by Glu56. Arg82 is a substrate binding site. The Zn(2+) site is built by Cys88 and Cys91. Tyr126 and Trp128 together coordinate substrate.

It belongs to the cytidine and deoxycytidylate deaminase family. In terms of assembly, homotetramer. It depends on Zn(2+) as a cofactor.

It carries out the reaction blasticidin S + H2O + H(+) = deaminohydroxyblasticidin S + NH4(+). In terms of biological role, catalyzes the deamination of the cytosine moiety of the antibiotics blasticidin S, cytomycin and acetylblasticidin S. The polypeptide is Blasticidin-S deaminase (bsd) (Aspergillus terreus).